Reading from the N-terminus, the 273-residue chain is Cbp/p300-interacting transactivator 2 (273 aa).

Positions 137–204 are disordered; that stretch reads DLHPAAGHQM…GSGGSGSSNM (68 aa). The segment covering 165 to 200 has biased composition (gly residues); the sequence is STPGGSGGSSTPGGSGGSAGGGAGSSNSGGGSGGSG.

This sequence belongs to the CITED family. In terms of assembly, interacts (via C-terminus) with SMAD2. Interacts (via C-terminus) with SMAD3 (via MH2 domain). Interacts with LHX2 (via LIM domains). Interacts with WT1. Interacts (via C-terminus) with EP300 (via CH1 domain); the interaction is stimulated in response to hypoxia. Interacts with PPARA. Interacts (via C-terminus) with TFAP2A, TFAP2B and TFAP2C.

The protein localises to the nucleus. Transcriptional coactivator of the p300/CBP-mediated transcription complex. Acts as a bridge, linking TFAP2 transcription factors and the p300/CBP transcriptional coactivator complex in order to stimulate TFAP2-mediated transcriptional activation. Positively regulates TGF-beta signaling through its association with the SMAD/p300/CBP-mediated transcriptional coactivator complex. Stimulates the peroxisome proliferator-activated receptors PPARA transcriptional activity. Enhances estrogen-dependent transactivation mediated by estrogen receptors. Also acts as a transcriptional corepressor; interferes with the binding of the transcription factors HIF1A or STAT2 and the p300/CBP transcriptional coactivator complex. Participates in sex determination and early gonad development by stimulating transcription activation of SRY. Plays a role in controlling left-right patterning during embryogenesis; potentiates transcriptional activation of NODAL-mediated gene transcription in the left lateral plate mesoderm (LPM). Plays an essential role in differentiation of the adrenal cortex from the adrenogonadal primordium (AGP); stimulates WT1-mediated transcription activation thereby up-regulating the nuclear hormone receptor NR5A1 promoter activity. Associates with chromatin to the PITX2 P1 promoter region. The chain is Cbp/p300-interacting transactivator 2 (CITED2) from Saguinus labiatus (Red-chested mustached tamarin).